The primary structure comprises 936 residues: Myocardin-related transcription factor A (936 aa).

3 RPEL repeats span residues 15–40 (TVLQLKLQQRRTREELENQGIMPPLK), 59–84 (DYLKRKIRSRPERAELVRMHILEETS), and 103–128 (DDLNEKISQRPGPMELVVKNILPVET). The Bipartite Nuclear localization signal motif lies at 62–100 (KRKIRSRPERAELVRMHILEETSAEPSLQAKQIKLKRAR). Disordered stretches follow at residues 146-185 (SSFDEDSSDALSPEQPASQESQGSIPSPIENRPSETTQIP), 234-258 (SQPKPSFEKSQRIKKPKEPKPKVKK), and 401-422 (SQDPSTATAASAKPTPVQQAKP). Over residues 160–170 (QPASQESQGSI) the composition is skewed to polar residues. Over residues 239–254 (SFEKSQRIKKPKEPKP) the composition is skewed to basic and acidic residues. The SAP domain occupies 368-402 (LDEMKVAELKLELKHRGLPVSGTKIDLIERLKASQ). Positions 404 to 416 (PSTATAASAKPTP) are enriched in low complexity. Residues 497 to 542 (DARDKDLMLREKDRQIEELTQRLKQKQELVERLRQQLEQEKRTPQH) adopt a coiled-coil conformation. Residues 707 to 755 (HNESPATPPQQPEPEPPPHSIFLTHSSPQWSKNPPGYDEAMKQQPNSCE) form a disordered region. Pro residues predominate over residues 712–725 (ATPPQQPEPEPPPH). Over residues 729–738 (LTHSSPQWSK) the composition is skewed to polar residues.

Interacts with srf, forming the srf-mrtfa nuclear complex which binds the 5'-CArG-3' consensus motif (CArG box) on DNA via srf. Interacts (via RPEL repeats) with globular actin (G-actin), thereby regulating its subcellular location and activity of the complex formed with srf.

The protein resides in the cytoplasm. Its subcellular location is the nucleus. Functionally, transcription coactivator that associates with the serum response factor (srf) transcription factor to control expression of genes regulating the cytoskeleton during development, morphogenesis and cell migration. The srf-mrtfa complex activity responds to Rho GTPase-induced changes in cellular globular actin (G-actin) concentration, thereby coupling cytoskeletal gene expression to cytoskeletal dynamics. Mrtfa binds G-actin via its RPEL repeats, regulating activity of the mrtfa-srf complex. Activity is also regulated by filamentous actin (F-actin) in the nucleus. The protein is Myocardin-related transcription factor A (mrtfa) of Xenopus laevis (African clawed frog).